Reading from the N-terminus, the 372-residue chain is D-alanine--D-alanine ligase (372 aa).

The ATP-grasp domain occupies 145–349 (KTVLRAGGIP…CPNLLDQLIE (205 aa)). 176-231 (DRWGTSELFVKAVSLGSSVATLPVKTETEFTKAVKEVFRYDDRLMVEPRIRGREIE) provides a ligand contact to ATP. Mg(2+) contacts are provided by Asp-303, Glu-316, and Asn-318.

It belongs to the D-alanine--D-alanine ligase family. Mg(2+) is required as a cofactor. The cofactor is Mn(2+).

The protein resides in the cytoplasm. The catalysed reaction is 2 D-alanine + ATP = D-alanyl-D-alanine + ADP + phosphate + H(+). It participates in cell wall biogenesis; peptidoglycan biosynthesis. Functionally, cell wall formation. The chain is D-alanine--D-alanine ligase from Coxiella burnetii (strain Dugway 5J108-111).